The chain runs to 1938 residues: Histone-lysine N-methyltransferase SETD1B (1938 aa).

The segment covering 1 to 20 has biased composition (basic and acidic residues); the sequence is MSFKEAKPGERGKNPEDHGR. The disordered stretch occupies residues 1–44; the sequence is MSFKEAKPGERGKNPEDHGRKQAASWMNGMEAANQPSTSAEKKS. An RRM domain is found at 111 to 199; it reads DEFYVGPVPP…NIIHAELDTK (89 aa). Disordered stretches follow at residues 226–357, 369–484, 496–630, 652–688, 916–1125, 1147–1174, 1187–1206, 1327–1373, 1413–1468, 1496–1528, and 1744–1772; these read LDAS…ENTF, FPRT…TRIA, LISS…EVTP, GFPP…VPPP, KEPP…SSPV, HQTA…HKQD, MQQN…NEEE, KTLS…GNSL, FPES…VPHM, ECEF…PKKP, and DEPP…RRSE. Polar residues-rich tracts occupy residues 254–290, 298–312, 375–407, and 446–457; these read VTPN…QGTP, PFSQ…QTTP, LSHS…PQTS, and DSTTEQKASFAQ. Low complexity predominate over residues 512-531; the sequence is SPISSSSSQLSPIPPYSSSS. Composition is skewed to polar residues over residues 532-546 and 569-585; these read HYQD…SSTG and SLCQ…QINQ. A compositionally biased stretch (basic and acidic residues) spans 588–599; sequence RKMETLDNKELV. Residues 619–628 show a composition bias toward acidic residues; that stretch reads EDMEISDDEV. 2 stretches are compositionally biased toward acidic residues: residues 976 to 990 and 1054 to 1114; these read SEGE…DDGE and DSSD…EDFF. Residues 1159–1174 show a composition bias toward basic and acidic residues; the sequence is KDLDVPLVESKEHKQD. Basic and acidic residues predominate over residues 1329 to 1343; sequence LSEEELPRTPGRDIL. 2 stretches are compositionally biased toward polar residues: residues 1349–1358 and 1441–1453; these read LGKSQSTETI and EPTS…NSVP. Over residues 1454 to 1464 the composition is skewed to pro residues; that stretch reads SPIPFASPPRG. The span at 1751-1765 shows a compositional bias: polar residues; sequence QGKSIPAQPQASTRA. The short motif at 1770 to 1775 is the RxxxRR motif element; the sequence is RSEQRR. The 118-residue stretch at 1799-1916 folds into the SET domain; it reads KKIRFCKSHI…VNEEITYDYK (118 aa). Tyr-1915 contributes to the S-adenosyl-L-methionine binding site. A Post-SET domain is found at 1922-1938; it reads VKIPCLCGAENCRGTLN.

This sequence belongs to the class V-like SAM-binding methyltransferase superfamily. As to quaternary structure, component of the SET1B/COMPASS complex.

It is found in the nucleus speckle. The protein localises to the chromosome. It catalyses the reaction L-lysyl(4)-[histone H3] + 3 S-adenosyl-L-methionine = N(6),N(6),N(6)-trimethyl-L-lysyl(4)-[histone H3] + 3 S-adenosyl-L-homocysteine + 3 H(+). Functionally, histone methyltransferase that specifically methylates 'Lys-4' of histone H3, when part of the SET1 histone methyltransferase (HMT) complex, but not if the neighboring 'Lys-9' residue is already methylated. H3 'Lys-4' methylation represents a specific tag for epigenetic transcriptional activation. This is Histone-lysine N-methyltransferase SETD1B (setd1b) from Xenopus laevis (African clawed frog).